Reading from the N-terminus, the 989-residue chain is Cellulose synthase A catalytic subunit 4 [UDP-forming] (989 aa).

The Cytoplasmic segment spans residues 1-184 (MMESGVPPCA…SRIIPISKNK (184 aa)). Zn(2+) contacts are provided by Cys-9, Cys-12, Cys-20, Cys-23, Cys-28, Cys-31, Cys-43, and Cys-46. The RING-type; degenerate zinc-finger motif lies at 9–47 (CAACGDDAHAACRACSYALCKACLDEDAAEGRTTCARCG). The segment covering 138–149 (KKEKKASAKKAA) has biased composition (basic residues). A disordered region spans residues 138-158 (KKEKKASAKKAAAKAQAPPVE). The helical transmembrane segment at 185 to 205 (LTPYRAVIIMRLVVLGLFFHY) threads the bilayer. Residues 206–213 (RITNPVYS) are Extracellular-facing. The helical transmembrane segment at 214 to 234 (AFGLWMTSVICEIWFGFSWIL) threads the bilayer. Topologically, residues 235 to 772 (DQFPKWCPIN…INTIVYPFTS (538 aa)) are cytoplasmic. UDP-alpha-D-glucose is bound by residues Ser-272, Lys-278, Glu-279, and Asp-308. Asp-308 is a catalytic residue. A coiled-coil region spans residues 362–389 (VKERRAMKRDYEEYKVRINALVAKAQKT). Lys-449 is a binding site for UDP-alpha-D-glucose. Lys-450 and Asp-474 together coordinate Mn(2+). Asp-688 is a catalytic residue. The helical transmembrane segment at 773-793 (LPLIAYCCLPAICLLTGKFII) threads the bilayer. At 794–798 (PTLSN) the chain is on the extracellular side. Residues 799 to 819 (AATIWFLGLFISIIVTSVLEL) traverse the membrane as a helical segment. The Cytoplasmic portion of the chain corresponds to 820–835 (RWSGIGIEDWWRNEQF). Residues 836–856 (WVIGGVSAHLFAVFQGILKMI) form a helical membrane-spanning segment. The Extracellular segment spans residues 857–884 (AGLDTNFTVTAKATDDTEFGELYVFKWT). Residue Asn-862 is glycosylated (N-linked (GlcNAc...) asparagine). Residues 885–905 (TVLIPPTSILVLNLVGVVAGF) form a helical membrane-spanning segment. The Cytoplasmic portion of the chain corresponds to 906 to 916 (SDALNSGYESW). Residues 917 to 937 (GPLFGKVFFAMWVIMHLYPFL) traverse the membrane as a helical segment. Topologically, residues 938 to 946 (KGLMGRQNR) are extracellular. Residues 947 to 967 (TPTIVVLWSVLLASVFSLLWV) form a helical membrane-spanning segment. Residues 968–989 (KIDPFIGSSETTTTNSCANFDC) are Cytoplasmic-facing.

It belongs to the glycosyltransferase 2 family. Plant cellulose synthase subfamily. Mn(2+) serves as cofactor. Requires Zn(2+) as cofactor.

It is found in the cell membrane. It catalyses the reaction [(1-&gt;4)-beta-D-glucosyl](n) + UDP-alpha-D-glucose = [(1-&gt;4)-beta-D-glucosyl](n+1) + UDP + H(+). The protein operates within glycan metabolism; plant cellulose biosynthesis. Its function is as follows. Catalytic subunit of cellulose synthase terminal complexes ('rosettes'), required for beta-1,4-glucan microfibril crystallization, a major mechanism of the cell wall formation. Involved in the secondary cell wall formation. This Oryza sativa subsp. japonica (Rice) protein is Cellulose synthase A catalytic subunit 4 [UDP-forming] (CESA4).